An 891-amino-acid polypeptide reads, in one-letter code: Schlafen family member 5 (891 aa).

K59 participates in a covalent cross-link: Glycyl lysine isopeptide (Lys-Gly) (interchain with G-Cter in SUMO2). 578–585 (GLPGSGKT) serves as a coordination point for ATP.

Belongs to the Schlafen family. Subgroup III subfamily.

Its function is as follows. May have a role in hematopoietic cell differentiation. The protein is Schlafen family member 5 (SLFN5) of Homo sapiens (Human).